The sequence spans 346 residues: uncharacterized protein (346 aa).

A disordered region spans residues 321–346; it reads TPWGTHSVAGVGPPPYARSGPASATT.

This is an uncharacterized protein from Mycobacterium tuberculosis (strain CDC 1551 / Oshkosh).